Consider the following 2263-residue polypeptide: Collagen alpha-6(VI) chain (2263 aa).

A signal peptide spans 1 to 19; that stretch reads MMLLILFLVIICSHISVNQ. The tract at residues 20-1391 is nonhelical region; it reads DSGPEYADVV…TCCCLFCKCI (1372 aa). VWFA domains are found at residues 27 to 206, 229 to 411, 436 to 606, 622 to 791, and 809 to 982; these read DVVF…IKDV, DVVF…RNQI, DIYL…RNQV, DIMF…EDDL, and DVVF…FSDV. N-linked (GlcNAc...) asparagine glycans are attached at residues N198, N275, N288, N347, and N520. N930 and N988 each carry an N-linked (GlcNAc...) asparagine glycan. VWFA domains follow at residues 1000–1171 and 1187–1371; these read DLVF…NKRI and DVVV…GSRL. N1290 is a glycosylation site (N-linked (GlcNAc...) asparagine). The segment at 1392-1725 is triple-helical region; sequence GGDGTMGDPG…GRKGVKGAKG (334 aa). Residues 1397 to 1723 are disordered; the sequence is MGDPGPPGKR…PPGRKGVKGA (327 aa). The span at 1498-1508 shows a compositional bias: basic and acidic residues; that stretch reads TPGDRGAKGLR. A Cell attachment site motif is present at residues 1508–1510; that stretch reads RGD. Residues 1547-1559 are compositionally biased toward basic residues; the sequence is SRRKTAAHGRRGH. Residues 1680 to 1689 show a composition bias toward gly residues; sequence GDPGGPGETG. The nonhelical region stretch occupies residues 1726 to 2263; that stretch reads LASFSTCELI…MIESAPKQHD (538 aa). 2 VWFA domains span residues 1757–1937 and 1965–2166; these read ELVF…ERLQ and DAAF…INSI.

The protein belongs to the type VI collagen family. Trimers composed of three different chains: alpha-1(VI), alpha-2(VI), and alpha-3(VI) or alpha-5(VI) or alpha-6(VI). In terms of processing, prolines at the third position of the tripeptide repeating unit (G-X-Y) are hydroxylated in some or all of the chains.

It is found in the secreted. The protein localises to the extracellular space. The protein resides in the extracellular matrix. Its function is as follows. Collagen VI acts as a cell-binding protein. The polypeptide is Collagen alpha-6(VI) chain (COL6A6) (Homo sapiens (Human)).